Here is a 360-residue protein sequence, read N- to C-terminus: Glyceraldehyde-3-phosphate dehydrogenase (360 aa).

Residues 13 to 14 (RI), aspartate 35, and arginine 82 each bind NAD(+). Residues 153–155 (SCT), threonine 184, 213–214 (TG), and arginine 236 each bind D-glyceraldehyde 3-phosphate. The active-site Nucleophile is cysteine 154. Residue asparagine 318 participates in NAD(+) binding.

The protein belongs to the glyceraldehyde-3-phosphate dehydrogenase family. As to quaternary structure, homotetramer.

The catalysed reaction is D-glyceraldehyde 3-phosphate + phosphate + NAD(+) = (2R)-3-phospho-glyceroyl phosphate + NADH + H(+). It participates in carbohydrate degradation; glycolysis; pyruvate from D-glyceraldehyde 3-phosphate: step 1/5. In terms of biological role, key enzyme in glycolysis that catalyzes the first step of the pathway by converting D-glyceraldehyde 3-phosphate (G3P) into 3-phospho-D-glyceroyl phosphate. Essential for the maintenance of cellular ATP levels and carbohydrate metabolism. The sequence is that of Glyceraldehyde-3-phosphate dehydrogenase from Atriplex nummularia (Old man saltbush).